A 418-amino-acid polypeptide reads, in one-letter code: MTLLALGINHKTAPVSLRERVTFSPDTLDQALDSLLAQPMVQGGVVLSTCNRTELYLSVEEQDNLQEALIRWLCDYHNLNEDDLRNSLYWHQDNDAVSHLMRVASGLDSLVLGEPQILGQVKKAFADSQKGHLHASALERMFQKSFSVAKRVRTETDIGASAVSVAFAACTLARQIFESLSTVTVLLVGAGETIELVARHLREHKVQKMIIANRTRERAQVLADEVGAEVISLSDIDERLREADIIISSTASPLPIIGKGMVERALKSRRNQPMLLVDIAVPRDVEPEVGKLANAYLYSVDDLQSIISHNLAQRKAAAVEAETIVAQEASEFMAWLRSQSASETIREYRSQSEHVRDELTVKALAALEQGGDAQAILQDLAWKLTNRLIHAPTKSLQQAARDGDDERLNILRDSLGLE.

Substrate-binding positions include 49–52, Ser-109, 114–116, and Gln-120; these read TCNR and EPQ. Catalysis depends on Cys-50, which acts as the Nucleophile. 189-194 serves as a coordination point for NADP(+); sequence GAGETI.

Belongs to the glutamyl-tRNA reductase family. In terms of assembly, homodimer.

It catalyses the reaction (S)-4-amino-5-oxopentanoate + tRNA(Glu) + NADP(+) = L-glutamyl-tRNA(Glu) + NADPH + H(+). It participates in porphyrin-containing compound metabolism; protoporphyrin-IX biosynthesis; 5-aminolevulinate from L-glutamyl-tRNA(Glu): step 1/2. Catalyzes the NADPH-dependent reduction of glutamyl-tRNA(Glu) to glutamate 1-semialdehyde (GSA). This is Glutamyl-tRNA reductase from Citrobacter koseri (strain ATCC BAA-895 / CDC 4225-83 / SGSC4696).